Reading from the N-terminus, the 123-residue chain is Thioredoxin domain-containing protein 17 (123 aa).

Positions 41–123 (SWCPDCVTAE…DLVRMMFTED (83 aa)) constitute a Thioredoxin domain. Catalysis depends on nucleophile residues Cys-43 and Cys-46. Residues Cys-43 and Cys-46 are joined by a disulfide bond.

It belongs to the thioredoxin family. As to expression, predominantly expressed in liver, brain and muscle. Also expressed in kidney, intestine, skin, stomach, gill and head kidney.

The protein resides in the cytoplasm. In terms of biological role, disulfide reductase. May participate in various redox reactions through the reversible oxidation of its active center dithiol to a disulfide and catalyze dithiol-disulfide exchange reactions. Has peroxidase activity and may contribute to the elimination of cellular hydrogen peroxide. May function as an antioxidant involved in response to viral infection. In Epinephelus coioides (Orange-spotted grouper), this protein is Thioredoxin domain-containing protein 17.